We begin with the raw amino-acid sequence, 431 residues long: uncharacterized protein (431 aa).

Transmembrane regions (helical) follow at residues 42 to 62 (LLIGMFGSVSLVNLLTIIGCL) and 74 to 94 (VMIFTWNLVLSQFFSILATML). Residue Asn105 is glycosylated (N-linked (GlcNAc...) asparagine; by host). The next 5 helical transmembrane spans lie at 111–131 (LVLFVDDVGLYSTALFFLFLI), 153–173 (AGVALYAVAFAWVLSIVAAVP), 202–222 (MWFLLGAPMIAVLANVVELAY), 236–256 (VCTFYVTCLMLFVPYYCFRVL), and 279–299 (ATRTLLTMRLGILPLFIIAFF).

The protein localises to the membrane. This is an uncharacterized protein from Homo sapiens (Human).